Reading from the N-terminus, the 142-residue chain is ATP synthase epsilon chain (142 aa).

The protein belongs to the ATPase epsilon chain family. In terms of assembly, F-type ATPases have 2 components, CF(1) - the catalytic core - and CF(0) - the membrane proton channel. CF(1) has five subunits: alpha(3), beta(3), gamma(1), delta(1), epsilon(1). CF(0) has three main subunits: a, b and c.

Its subcellular location is the cell inner membrane. Functionally, produces ATP from ADP in the presence of a proton gradient across the membrane. This is ATP synthase epsilon chain from Shewanella woodyi (strain ATCC 51908 / MS32).